Consider the following 164-residue polypeptide: Cell division protein SepF (164 aa).

The disordered stretch occupies residues 21-71 (YQQGQQPAQQQQSPVQAVPTPAPAPQQQAKRAPVTPLHKPSTTTRNAAPAE). The segment covering 22 to 54 (QQGQQPAQQQQSPVQAVPTPAPAPQQQAKRAPV) has biased composition (low complexity).

The protein belongs to the SepF family. Homodimer. Interacts with FtsZ.

The protein localises to the cytoplasm. Its function is as follows. Cell division protein that is part of the divisome complex and is recruited early to the Z-ring. Probably stimulates Z-ring formation, perhaps through the cross-linking of FtsZ protofilaments. Its function overlaps with FtsA. The protein is Cell division protein SepF of Clavibacter michiganensis subsp. michiganensis (strain NCPPB 382).